Here is an 873-residue protein sequence, read N- to C-terminus: Probable inorganic carbon transporter subunit DabA (873 aa).

Positions 393, 395, 575, and 590 each coordinate Zn(2+).

This sequence belongs to the inorganic carbon transporter (TC 9.A.2) DabA family. Forms a complex with DabB. It depends on Zn(2+) as a cofactor.

The protein resides in the cell membrane. In terms of biological role, part of an energy-coupled inorganic carbon pump. The protein is Probable inorganic carbon transporter subunit DabA of Bacillus licheniformis (strain ATCC 14580 / DSM 13 / JCM 2505 / CCUG 7422 / NBRC 12200 / NCIMB 9375 / NCTC 10341 / NRRL NRS-1264 / Gibson 46).